Here is a 104-residue protein sequence, read N- to C-terminus: L-rhamnose mutarotase (104 aa).

A substrate-binding site is contributed by tyrosine 18. The active-site Proton donor is histidine 22. Substrate is bound by residues tyrosine 41 and 76 to 77 (WW).

Belongs to the rhamnose mutarotase family. In terms of assembly, homodimer.

Its subcellular location is the cytoplasm. It catalyses the reaction alpha-L-rhamnose = beta-L-rhamnose. It participates in carbohydrate metabolism; L-rhamnose metabolism. Involved in the anomeric conversion of L-rhamnose. In Salmonella dublin (strain CT_02021853), this protein is L-rhamnose mutarotase.